A 701-amino-acid polypeptide reads, in one-letter code: Peptide transporter CstA (701 aa).

At 1-6 (MNKSGK) the chain is on the cytoplasmic side. A helical membrane pass occupies residues 7-27 (YLVWTVLSVMGAFALGYIALN). Residues 28–33 (RGEQIN) are Periplasmic-facing. Residues 34–54 (ALWIVVASVCIYLIAYRFYGL) traverse the membrane as a helical segment. The Cytoplasmic segment spans residues 55–86 (YIAKNVLAVDPTRMTPAVRHNDGLDYVPTDKK). A helical transmembrane segment spans residues 87 to 107 (VLFGHHFAAIAGAGPLVGPVL). The Periplasmic segment spans residues 108-117 (AAQMGYLPGM). A helical membrane pass occupies residues 118–138 (IWLLAGVVLAGAVQDFMVLFV). Over 139-160 (STRRDGRSLGELVKEEMGPTAG) the chain is Cytoplasmic. Residues 161–181 (VIALVACFMIMVIILAVLAMI) form a helical membrane-spanning segment. Topologically, residues 182-189 (VVKALTHS) are periplasmic. Residues 190 to 210 (PWGTYTVAFTIPLALFMGIYL) form a helical membrane-spanning segment. The Cytoplasmic segment spans residues 211 to 217 (RYLRPGR). The chain crosses the membrane as a helical span at residues 218-238 (IGEVSVIGLVFLIFAIISGGW). Topologically, residues 239–255 (VAESPTWAPYFDFTGVQ) are periplasmic. A helical membrane pass occupies residues 256–276 (LTWMLVGYGFVAAVLPVWLLL). The Cytoplasmic segment spans residues 277–280 (APRD). Residues 281 to 301 (YLSTFLKIGTIVGLAVGILIM) traverse the membrane as a helical segment. At 302 to 324 (RPTLTMPALTKFVDGTGPVWTGN) the chain is on the periplasmic side. The chain crosses the membrane as a helical span at residues 325–345 (LFPFLFITIACGAVSGFHALI). The Cytoplasmic portion of the chain corresponds to 346-372 (SSGTTPKMLANEGQACFIGYGGMLMES). The chain crosses the membrane as a helical span at residues 373–393 (FVAIMALVSACIIDPGVYFAM). Residues 394–395 (NS) lie on the Periplasmic side of the membrane. A helical membrane pass occupies residues 396–416 (PMAVLAPAGTADVVASAAQVV). Topologically, residues 417–439 (SSWGFSITPDTLNQIASEVGEQS) are cytoplasmic. Residues 440–460 (IISRAGGAPTLAVGMAYILHG) form a helical membrane-spanning segment. Topologically, residues 461–463 (ALG) are periplasmic. The helical transmembrane segment at 464–484 (GMMDVAFWYHFAILFEALFIL) threads the bilayer. Topologically, residues 485–523 (TAVDAGTRAARFMLQDLLGVVSPGLKRTDSLPANLLATA) are cytoplasmic. The chain crosses the membrane as a helical span at residues 524–544 (LCVLAWGYFLHQGVVDPLGGI). Residues 545 to 550 (NTLWPL) are Periplasmic-facing. A helical membrane pass occupies residues 551–571 (FGIANQMLAGMALMLCAVVLF). The Cytoplasmic portion of the chain corresponds to 572 to 577 (KMKRQR). The chain crosses the membrane as a helical span at residues 578–598 (YAWVALVPTAWLLICTLTAGW). Topologically, residues 599 to 643 (QKAFSPDAKVGFLAIANKFQAMIDSGNIPSQYTESQLAQLVFNNR) are periplasmic. Residues 644 to 664 (LDAGLTIFFMVVVVVLALFSI) form a helical membrane-spanning segment. Residues 665 to 701 (KTALAALKDPKPTAKETPYEPMPENVEEIVAQAKGAH) are Cytoplasmic-facing.

Belongs to the peptide transporter carbon starvation (CstA) (TC 2.A.114) family.

Its subcellular location is the cell inner membrane. In terms of biological role, involved in peptide utilization during carbon starvation. The polypeptide is Peptide transporter CstA (Escherichia coli (strain K12)).